We begin with the raw amino-acid sequence, 455 residues long: Ribosomal protein uS12 methylthiotransferase RimO (455 aa).

Residues 30–140 (PTIGMVSLGC…VLDAVHGAVP (111 aa)) form the MTTase N-terminal domain. 6 residues coordinate [4Fe-4S] cluster: Cys39, Cys75, Cys104, Cys171, Cys175, and Cys178. The region spanning 157–386 (LTPRHFSYLK…MEKAQAISEA (230 aa)) is the Radical SAM core domain. The TRAM domain occupies 389–455 (AAKVGRRIEV…GEYDLWGRPV (67 aa)).

Belongs to the methylthiotransferase family. RimO subfamily. It depends on [4Fe-4S] cluster as a cofactor.

It localises to the cytoplasm. It catalyses the reaction L-aspartate(89)-[ribosomal protein uS12]-hydrogen + (sulfur carrier)-SH + AH2 + 2 S-adenosyl-L-methionine = 3-methylsulfanyl-L-aspartate(89)-[ribosomal protein uS12]-hydrogen + (sulfur carrier)-H + 5'-deoxyadenosine + L-methionine + A + S-adenosyl-L-homocysteine + 2 H(+). Catalyzes the methylthiolation of an aspartic acid residue of ribosomal protein uS12. This Cereibacter sphaeroides (strain ATCC 17029 / ATH 2.4.9) (Rhodobacter sphaeroides) protein is Ribosomal protein uS12 methylthiotransferase RimO.